The sequence spans 504 residues: ATP synthase subunit alpha, chloroplastic (504 aa).

170 to 177 (GDRQTGKT) serves as a coordination point for ATP.

It belongs to the ATPase alpha/beta chains family. F-type ATPases have 2 components, CF(1) - the catalytic core - and CF(0) - the membrane proton channel. CF(1) has five subunits: alpha(3), beta(3), gamma(1), delta(1), epsilon(1). CF(0) has four main subunits: a, b, b' and c.

It localises to the plastid. Its subcellular location is the chloroplast thylakoid membrane. The catalysed reaction is ATP + H2O + 4 H(+)(in) = ADP + phosphate + 5 H(+)(out). In terms of biological role, produces ATP from ADP in the presence of a proton gradient across the membrane. The alpha chain is a regulatory subunit. This Cyanidium caldarium (Red alga) protein is ATP synthase subunit alpha, chloroplastic.